The following is a 118-amino-acid chain: uncharacterized protein (118 aa).

A helical transmembrane segment spans residues 41-61 (IFLLIIITIIFALTMYTSVQV).

Its subcellular location is the host membrane. This is an uncharacterized protein from Ostreid herpesvirus 1 (isolate France) (OsHV-1).